The sequence spans 450 residues: Phosphoglucosamine mutase (450 aa).

Catalysis depends on Ser101, which acts as the Phosphoserine intermediate. Mg(2+)-binding residues include Ser101, Asp242, Asp244, and Asp246. Position 101 is a phosphoserine (Ser101).

It belongs to the phosphohexose mutase family. Requires Mg(2+) as cofactor. In terms of processing, activated by phosphorylation.

It carries out the reaction alpha-D-glucosamine 1-phosphate = D-glucosamine 6-phosphate. Catalyzes the conversion of glucosamine-6-phosphate to glucosamine-1-phosphate. This Rhodopseudomonas palustris (strain BisA53) protein is Phosphoglucosamine mutase.